Consider the following 60-residue polypeptide: Large ribosomal subunit protein bL32 (60 aa).

Basic residues predominate over residues 1 to 20 (MAKPARHTSKAKRNKRRTHY). The interval 1-22 (MAKPARHTSKAKRNKRRTHYKL) is disordered.

The protein belongs to the bacterial ribosomal protein bL32 family.

The protein is Large ribosomal subunit protein bL32 of Streptococcus agalactiae serotype V (strain ATCC BAA-611 / 2603 V/R).